A 138-amino-acid chain; its full sequence is Cyclin-dependent kinase 4 inhibitor B (138 aa).

The ANK 1; truncated repeat unit spans residues 13–39 (GSDEGLASAAARGLVEKVRQLLEAGAD). ANK repeat units lie at residues 46-74 (FGRRAIQVMMMGSARVAELLLLHGAEPNC), 79-108 (TLTRPVHDAAREGFLDTLVVLHRAGARLDV), and 112-138 (WGRLPVDLAEERGHRDVAGYLRTATGD).

This sequence belongs to the CDKN2 cyclin-dependent kinase inhibitor family. In terms of assembly, heterodimer of CDKN2B with CDK4 or CDK6. Isoform 2 does not interact with CDK4 nor CDK6. In terms of tissue distribution, isoform 2 is expressed in normal (keratinocytes, fibroblasts) and tumor cell lines.

The protein localises to the cytoplasm. Its function is as follows. Interacts strongly with CDK4 and CDK6. Potent inhibitor. Potential effector of TGF-beta induced cell cycle arrest. This Homo sapiens (Human) protein is Cyclin-dependent kinase 4 inhibitor B (CDKN2B).